The sequence spans 324 residues: Glyoxylate/hydroxypyruvate reductase B (324 aa).

Residues Arg237 and Glu266 contribute to the active site. His285 acts as the Proton donor in catalysis.

This sequence belongs to the D-isomer specific 2-hydroxyacid dehydrogenase family. GhrB subfamily. In terms of assembly, homodimer.

The protein localises to the cytoplasm. It catalyses the reaction glycolate + NADP(+) = glyoxylate + NADPH + H(+). It carries out the reaction (R)-glycerate + NAD(+) = 3-hydroxypyruvate + NADH + H(+). The catalysed reaction is (R)-glycerate + NADP(+) = 3-hydroxypyruvate + NADPH + H(+). Catalyzes the NADPH-dependent reduction of glyoxylate and hydroxypyruvate into glycolate and glycerate, respectively. In Salmonella agona (strain SL483), this protein is Glyoxylate/hydroxypyruvate reductase B.